The following is a 92-amino-acid chain: Small ribosomal subunit protein uS19c (92 aa).

This sequence belongs to the universal ribosomal protein uS19 family.

Its subcellular location is the plastid. It localises to the chloroplast. Functionally, protein S19 forms a complex with S13 that binds strongly to the 16S ribosomal RNA. The sequence is that of Small ribosomal subunit protein uS19c (rps19) from Trieres chinensis (Marine centric diatom).